Here is a 105-residue protein sequence, read N- to C-terminus: Nitrogenase-stabilizing/protective protein NifW (105 aa).

Belongs to the NifW family. In terms of assembly, homotrimer; associates with NifD.

Functionally, may protect the nitrogenase Fe-Mo protein from oxidative damage. This Nostoc punctiforme (strain ATCC 29133 / PCC 73102) protein is Nitrogenase-stabilizing/protective protein NifW.